The chain runs to 51 residues: Ribosome biogenesis protein Nop10 (51 aa).

Belongs to the NOP10 family.

Involved in ribosome biogenesis; more specifically in 18S rRNA pseudouridylation and in cleavage of pre-rRNA. This is Ribosome biogenesis protein Nop10 from Methanosarcina barkeri (strain Fusaro / DSM 804).